We begin with the raw amino-acid sequence, 535 residues long: MQRIPLWLVRSTHCLILLFQDDVQVRKSCLEPFLFLSPERKREIHQLLVAFNQSLVTPTQDEEKILSDIQRACLQIAEDLKHLNPFTGLLLDLNLYTLWTLLRNYKTKQRSQPVNSTVVSRYAHHVVKYIMQRLVYTTDRLFLTAPTSGIVLPVPLANAIFNLLSHCRKKCTGLWRNYGTEKSVLMGLGKEITLCYQALNESGIVSTTLAAFIKLSFPTISIPNLFKPMFQSCKGNQDNFPDICTQGSVIRRPHQGVFGDTFPIPDPLMREISENSFKKFSTANISTLLQNPKEILEMDPFDPRIGGFPLNKEETATPLKDSSFSNPTFINTGAANTLLPAASVTPALESLFSPTHFPCMSDESIASTSHVPLDNNISLPTLVKTNFPLKRKRQSRNIDPNTPRRPRGRPKGSKTKKRPTCSPALFQSSDIPTDSLHVKCPEMLPTVPQNEFCDSSNIQPCTSSSVLENDNLVPINEAETDDNILATILQDLYDLPAPPVLCSHENQTLEIDNNVDIEDLGLSFPMSLQDFLNDE.

The tract at residues 384 to 426 (KTNFPLKRKRQSRNIDPNTPRRPRGRPKGSKTKKRPTCSPALF) is disordered. A compositionally biased stretch (basic residues) spans 404-419 (RRPRGRPKGSKTKKRP).

It belongs to the herpesviridae TAF50 family.

In terms of biological role, transcription activation. Regulates the delayed-early 110 kDa promoter. This Saimiriine herpesvirus 2 (strain 11) (SaHV-2) protein is Putative transcription activator BRLF1 homolog (50).